Here is a 36-residue protein sequence, read N- to C-terminus: Potassium channel toxin alpha-KTx 11.3 (36 aa).

Disulfide bonds link cysteine 8/cysteine 27, cysteine 13/cysteine 33, and cysteine 17/cysteine 35.

Belongs to the short scorpion toxin superfamily. Potassium channel inhibitor family. Alpha-KTx 11 subfamily. Expressed by the venom gland.

The protein localises to the secreted. In terms of biological role, binds and inhibits voltage-sensitive potassium channels. Inhibits the vertebrate potassium channel Kv1.1/KCNA1 with low affinity. This Parabuthus granulatus (Granulated thick-tailed scorpion) protein is Potassium channel toxin alpha-KTx 11.3.